The sequence spans 252 residues: Vitamin B12 import ATP-binding protein BtuD (252 aa).

Positions 2 to 237 (IQIKSLSVGA…EQLESVFNTQ (236 aa)) constitute an ABC transporter domain. Position 30 to 37 (30 to 37 (GPNGSGKS)) interacts with ATP.

Belongs to the ABC transporter superfamily. Vitamin B12 importer (TC 3.A.1.13.1) family. As to quaternary structure, the complex is composed of two ATP-binding proteins (BtuD), two transmembrane proteins (BtuC) and a solute-binding protein (BtuF).

The protein resides in the cell inner membrane. The enzyme catalyses an R-cob(III)alamin(out) + ATP + H2O = an R-cob(III)alamin(in) + ADP + phosphate + H(+). Functionally, part of the ABC transporter complex BtuCDF involved in vitamin B12 import. Responsible for energy coupling to the transport system. This is Vitamin B12 import ATP-binding protein BtuD from Vibrio atlanticus (strain LGP32) (Vibrio splendidus (strain Mel32)).